The chain runs to 425 residues: Serine--tRNA ligase (425 aa).

233–235 contacts L-serine; it reads TAE. 264-266 contacts ATP; the sequence is RRE. E287 serves as a coordination point for L-serine. 351–354 contributes to the ATP binding site; the sequence is EISS. S385 contributes to the L-serine binding site.

Belongs to the class-II aminoacyl-tRNA synthetase family. Type-1 seryl-tRNA synthetase subfamily. Homodimer. The tRNA molecule binds across the dimer.

The protein localises to the cytoplasm. It catalyses the reaction tRNA(Ser) + L-serine + ATP = L-seryl-tRNA(Ser) + AMP + diphosphate + H(+). It carries out the reaction tRNA(Sec) + L-serine + ATP = L-seryl-tRNA(Sec) + AMP + diphosphate + H(+). It participates in aminoacyl-tRNA biosynthesis; selenocysteinyl-tRNA(Sec) biosynthesis; L-seryl-tRNA(Sec) from L-serine and tRNA(Sec): step 1/1. In terms of biological role, catalyzes the attachment of serine to tRNA(Ser). Is also able to aminoacylate tRNA(Sec) with serine, to form the misacylated tRNA L-seryl-tRNA(Sec), which will be further converted into selenocysteinyl-tRNA(Sec). This Synechococcus sp. (strain CC9902) protein is Serine--tRNA ligase.